Consider the following 553-residue polypeptide: Glutamate--tRNA ligase (553 aa).

Positions 98–108 (PNPSGPLHIGH) match the 'HIGH' region motif.

The protein belongs to the class-I aminoacyl-tRNA synthetase family. Glutamate--tRNA ligase type 2 subfamily.

It is found in the cytoplasm. It carries out the reaction tRNA(Glu) + L-glutamate + ATP = L-glutamyl-tRNA(Glu) + AMP + diphosphate. Functionally, catalyzes the attachment of glutamate to tRNA(Glu) in a two-step reaction: glutamate is first activated by ATP to form Glu-AMP and then transferred to the acceptor end of tRNA(Glu). This Methanocaldococcus jannaschii (strain ATCC 43067 / DSM 2661 / JAL-1 / JCM 10045 / NBRC 100440) (Methanococcus jannaschii) protein is Glutamate--tRNA ligase.